We begin with the raw amino-acid sequence, 184 residues long: MDTQKIEAAVKMIIEAVGEDANREGLQETPARVARMYQEIFSGLGQTAEEHLSKSFEIIDDNMVVEKDIFFHTMCEHHFLPFYGRAHIAYIPDGRVAGLSKLARTVEVYSKKPQIQERLNIEVADALMDYLGAKGAFVIIEAEHMCMSMRGVRKPGTATLTTVARGLFETDKDLRDQAYRLMGL.

Zn(2+)-binding residues include Cys75, His78, and Cys146.

It belongs to the GTP cyclohydrolase I family. Toroid-shaped homodecamer, composed of two pentamers of five dimers.

The catalysed reaction is GTP + H2O = 7,8-dihydroneopterin 3'-triphosphate + formate + H(+). It functions in the pathway cofactor biosynthesis; 7,8-dihydroneopterin triphosphate biosynthesis; 7,8-dihydroneopterin triphosphate from GTP: step 1/1. This chain is GTP cyclohydrolase 1, found in Streptococcus pneumoniae serotype 2 (strain D39 / NCTC 7466).